The following is a 292-amino-acid chain: Complex I assembly factor TIMMDC1, mitochondrial (292 aa).

A run of 2 helical transmembrane segments spans residues 146-168 and 195-215; these read WSWR…TVYR and GLLS…VLIL.

The protein belongs to the Tim17/Tim22/Tim23 family. Associates with the intermediate 315 kDa subcomplex of incompletely assembled complex I.

The protein localises to the mitochondrion membrane. Functionally, chaperone protein involved in the assembly of the mitochondrial NADH:ubiquinone oxidoreductase complex (complex I). Participates in constructing the membrane arm of complex I. This Danio rerio (Zebrafish) protein is Complex I assembly factor TIMMDC1, mitochondrial (timmdc1).